Here is a 63-residue protein sequence, read N- to C-terminus: Cytochrome c oxidase subunit 7C, mitochondrial (63 aa).

The transit peptide at 1–16 directs the protein to the mitochondrion; the sequence is MLGQSIRRFTTSVVRR. The Mitochondrial matrix portion of the chain corresponds to 17 to 33; the sequence is SHYEEGPGKNLPFSVEN. Lys-25 carries the post-translational modification N6-acetyllysine; alternate. Lys-25 bears the N6-succinyllysine; alternate mark. A helical transmembrane segment spans residues 34-60; it reads KWRLLLMMTVYFGSGFAAPFFIVRHQL. The Mitochondrial intermembrane segment spans residues 61–63; sequence LKK.

The protein belongs to the cytochrome c oxidase VIIc family. Component of the cytochrome c oxidase (complex IV, CIV), a multisubunit enzyme composed of 14 subunits. The complex is composed of a catalytic core of 3 subunits MT-CO1, MT-CO2 and MT-CO3, encoded in the mitochondrial DNA, and 11 supernumerary subunits COX4I, COX5A, COX5B, COX6A, COX6B, COX6C, COX7A, COX7B, COX7C, COX8 and NDUFA4, which are encoded in the nuclear genome. The complex exists as a monomer or a dimer and forms supercomplexes (SCs) in the inner mitochondrial membrane with NADH-ubiquinone oxidoreductase (complex I, CI) and ubiquinol-cytochrome c oxidoreductase (cytochrome b-c1 complex, complex III, CIII), resulting in different assemblies (supercomplex SCI(1)III(2)IV(1) and megacomplex MCI(2)III(2)IV(2)). Interacts with RAB5IF.

The protein localises to the mitochondrion inner membrane. The protein operates within energy metabolism; oxidative phosphorylation. Component of the cytochrome c oxidase, the last enzyme in the mitochondrial electron transport chain which drives oxidative phosphorylation. The respiratory chain contains 3 multisubunit complexes succinate dehydrogenase (complex II, CII), ubiquinol-cytochrome c oxidoreductase (cytochrome b-c1 complex, complex III, CIII) and cytochrome c oxidase (complex IV, CIV), that cooperate to transfer electrons derived from NADH and succinate to molecular oxygen, creating an electrochemical gradient over the inner membrane that drives transmembrane transport and the ATP synthase. Cytochrome c oxidase is the component of the respiratory chain that catalyzes the reduction of oxygen to water. Electrons originating from reduced cytochrome c in the intermembrane space (IMS) are transferred via the dinuclear copper A center (CU(A)) of subunit 2 and heme A of subunit 1 to the active site in subunit 1, a binuclear center (BNC) formed by heme A3 and copper B (CU(B)). The BNC reduces molecular oxygen to 2 water molecules using 4 electrons from cytochrome c in the IMS and 4 protons from the mitochondrial matrix. This Rattus norvegicus (Rat) protein is Cytochrome c oxidase subunit 7C, mitochondrial (Cox7c).